A 278-amino-acid chain; its full sequence is 3-methyl-2-oxobutanoate hydroxymethyltransferase 1 (278 aa).

Positions 49 and 88 each coordinate Mg(2+). 3-methyl-2-oxobutanoate contacts are provided by residues 49–50 (DS), Asp88, and Lys118. Glu120 provides a ligand contact to Mg(2+). Glu187 functions as the Proton acceptor in the catalytic mechanism.

Belongs to the PanB family. As to quaternary structure, homodecamer; pentamer of dimers. It depends on Mg(2+) as a cofactor.

It localises to the cytoplasm. The catalysed reaction is 3-methyl-2-oxobutanoate + (6R)-5,10-methylene-5,6,7,8-tetrahydrofolate + H2O = 2-dehydropantoate + (6S)-5,6,7,8-tetrahydrofolate. It functions in the pathway cofactor biosynthesis; (R)-pantothenate biosynthesis; (R)-pantoate from 3-methyl-2-oxobutanoate: step 1/2. Functionally, catalyzes the reversible reaction in which hydroxymethyl group from 5,10-methylenetetrahydrofolate is transferred onto alpha-ketoisovalerate to form ketopantoate. This is 3-methyl-2-oxobutanoate hydroxymethyltransferase 1 from Hahella chejuensis (strain KCTC 2396).